The primary structure comprises 907 residues: Sensor protein GacS (907 aa).

Helical transmembrane passes span 9 to 25 (ASLM…WMQL), 84 to 101 (VLAH…IGSG), and 159 to 178 (LFAS…TLAV). The region spanning 182–234 (RTINGPMSQIKQAVSQLKDGNLETRLPPLGSRELDELASGINRMAATLQNAQE) is the HAMP domain. The Histidine kinase domain occupies 281–502 (NMSHEIRTPL…EFWISLKLPK (222 aa)). H284 is modified (phosphohistidine; by autocatalysis). Residues 658-777 (RVLCVDDNPA…QLAQVVLKWT (120 aa)) form the Response regulatory domain. Residue D707 is modified to 4-aspartylphosphate. The HPt domain maps to 814 to 907 (KADLAADMLA…RLEAEARVMA (94 aa)). H853 carries the post-translational modification Phosphohistidine.

In terms of processing, activation requires a sequential transfer of a phosphate group from a His in the primary transmitter domain, to an Asp in the receiver domain and to a His in the secondary transmitter domain.

It localises to the cell inner membrane. It carries out the reaction ATP + protein L-histidine = ADP + protein N-phospho-L-histidine.. In terms of biological role, forms part of a two-component regulatory system GacA/GacS(LemA). May be involved in lesion formation, swarming and in the production of extracellular protease, syringomycin and N-acyl-L-homoserine lactone (acyl-HSL). Required for pathogenicity on bean. This Pseudomonas syringae pv. syringae protein is Sensor protein GacS (gacS).